The primary structure comprises 994 residues: Myosin IA heavy chain (994 aa).

Residues 12 to 720 (VGVEDLIMLT…PLFLLEDKRN (709 aa)) enclose the Myosin motor domain. 105–112 (GESGAGKT) lines the ATP pocket. Residues 574-654 (TFIPTDKKRP…RAGYCYRQTF (81 aa)) are actin-binding. 2 consecutive IQ domains span residues 723–744 (LNDLATKIGSVWKMYKQRKWYL) and 745–774 (RTLAAIKIQRTYRGWLLVRECVKLKNQSIS). The TH1 domain occupies 782–970 (RNRQSIKLSK…ANSPSFTAKA (189 aa)).

The protein belongs to the TRAFAC class myosin-kinesin ATPase superfamily. Myosin family. In terms of assembly, myosin I heavy chain is single-headed. Dimer of a heavy and a light chain. Inability to self-assemble into filaments.

Its function is as follows. Actin-based motor protein, possibly involved in a wide range of motile processes, such as cell movement across a surface, and extension and retraction of pseudopodia or lamellipodia. In Dictyostelium discoideum (Social amoeba), this protein is Myosin IA heavy chain (myoA).